We begin with the raw amino-acid sequence, 150 residues long: S-protein homolog 28 (150 aa).

N-linked (GlcNAc...) asparagine glycosylation is present at N122.

This sequence belongs to the plant self-incompatibility (S1) protein family.

The protein localises to the secreted. The sequence is that of S-protein homolog 28 from Arabidopsis thaliana (Mouse-ear cress).